A 305-amino-acid chain; its full sequence is Homoserine O-acetyltransferase (305 aa).

Cysteine 142 serves as the catalytic Acyl-thioester intermediate. 2 residues coordinate substrate: lysine 163 and serine 192. Histidine 235 (proton acceptor) is an active-site residue. Glutamate 237 is an active-site residue. Substrate is bound at residue arginine 249.

The protein belongs to the MetA family.

The protein resides in the cytoplasm. The catalysed reaction is L-homoserine + acetyl-CoA = O-acetyl-L-homoserine + CoA. It participates in amino-acid biosynthesis; L-methionine biosynthesis via de novo pathway; O-acetyl-L-homoserine from L-homoserine: step 1/1. Transfers an acetyl group from acetyl-CoA to L-homoserine, forming acetyl-L-homoserine. This chain is Homoserine O-acetyltransferase, found in Bacteroides thetaiotaomicron (strain ATCC 29148 / DSM 2079 / JCM 5827 / CCUG 10774 / NCTC 10582 / VPI-5482 / E50).